The sequence spans 185 residues: Acireductone dioxygenase (185 aa).

Fe(2+) contacts are provided by His-97, His-99, Glu-103, and His-141. Positions 97, 99, 103, and 141 each coordinate Ni(2+).

It belongs to the acireductone dioxygenase (ARD) family. As to quaternary structure, monomer. Fe(2+) is required as a cofactor. The cofactor is Ni(2+).

It catalyses the reaction 1,2-dihydroxy-5-(methylsulfanyl)pent-1-en-3-one + O2 = 3-(methylsulfanyl)propanoate + CO + formate + 2 H(+). The catalysed reaction is 1,2-dihydroxy-5-(methylsulfanyl)pent-1-en-3-one + O2 = 4-methylsulfanyl-2-oxobutanoate + formate + 2 H(+). Its pathway is amino-acid biosynthesis; L-methionine biosynthesis via salvage pathway; L-methionine from S-methyl-5-thio-alpha-D-ribose 1-phosphate: step 5/6. Catalyzes 2 different reactions between oxygen and the acireductone 1,2-dihydroxy-3-keto-5-methylthiopentene (DHK-MTPene) depending upon the metal bound in the active site. Fe-containing acireductone dioxygenase (Fe-ARD) produces formate and 2-keto-4-methylthiobutyrate (KMTB), the alpha-ketoacid precursor of methionine in the methionine recycle pathway. Ni-containing acireductone dioxygenase (Ni-ARD) produces methylthiopropionate, carbon monoxide and formate, and does not lie on the methionine recycle pathway. This chain is Acireductone dioxygenase, found in Stenotrophomonas maltophilia (strain R551-3).